Here is a 541-residue protein sequence, read N- to C-terminus: Atlastin-3 (541 aa).

The segment at 1–22 is disordered; sequence MLSPQRTAAVASRGAGDAMENG. Residues 1-25 are N-terminal hypervariable region (HVR); it reads MLSPQRTAAVASRGAGDAMENGKPG. Over 1–445 the chain is Cytoplasmic; it reads MLSPQRTAAV…NVFSTFRTPA (445 aa). In terms of domain architecture, GB1/RHD3-type G spans 57–305; that stretch reads DLDVVVVSVA…LIPYVLNPSK (249 aa). Residues R70, K71, G72, K73, S74, F75, and R109 each contribute to the GDP site. D142 contacts Mg(2+). GDP is bound by residues R213, D214, V272, and S275. The 3HB (three-helix bundle) domain stretch occupies residues 343–434; sequence MLQATAEANN…YENFCKHNGS (92 aa). K391 bears the N6-acetyllysine mark. A helical membrane pass occupies residues 446–466; the sequence is VLFTGIAALYIASGFTGFIGL. Residue E467 is a topological domain, lumenal. The helical transmembrane segment at 468-488 threads the bilayer; sequence VVAQLFNCMVGLLLIALLTWG. The Cytoplasmic segment spans residues 489-541; that stretch reads YIRYSGQYRELGGAIDSGAAYVLEQASSHIGNSTQAAVRDAVVGRPPADKKSQ.

The protein belongs to the TRAFAC class dynamin-like GTPase superfamily. GB1/RHD3 GTPase family. GB1 subfamily. Monomeric and homodimeric. The homodimer, transiently formed by two molecules on opposing membranes, is the active form mediating ER membrane fusion. Interacts with ZFYVE27; both proteins are involved in endoplasmic reticulum tubular network organization. Interacts with REEP5; both proteins are involved in endoplasmic reticulum tubular network organization. As to expression, expressed in cardiomyocytes (at protein level).

Its subcellular location is the endoplasmic reticulum membrane. It carries out the reaction GTP + H2O = GDP + phosphate + H(+). Functionally, atlastin-3 (ATL3) is a membrane-anchored GTPase that mediates the GTP-dependent fusion of endoplasmic reticulum (ER) membranes, maintaining the continuous ER network. It facilitates the formation of three-way junctions where ER tubules intersect. Two atlastin-3 on neighboring ER tubules bind GTP and form loose homodimers through the GB1/RHD3-type G domains and 3HB regions. Upon GTP hydrolysis, the 3HB regions tighten, pulling the membranes together to drive their fusion. After fusion, the homodimer disassembles upon release of inorganic phosphate (Pi). Subsequently, GDP dissociates, resetting the monomers to a conformation ready for a new fusion cycle. The protein is Atlastin-3 of Mus musculus (Mouse).